We begin with the raw amino-acid sequence, 166 residues long: NAD(P)H-quinone oxidoreductase subunit I, chloroplastic (166 aa).

2 consecutive 4Fe-4S ferredoxin-type domains span residues Gly55–Lys84 and Leu95–Glu124. Positions 64, 67, 70, 74, 104, 107, 110, and 114 each coordinate [4Fe-4S] cluster.

The protein belongs to the complex I 23 kDa subunit family. In terms of assembly, NDH is composed of at least 16 different subunits, 5 of which are encoded in the nucleus. It depends on [4Fe-4S] cluster as a cofactor.

The protein localises to the plastid. Its subcellular location is the chloroplast thylakoid membrane. The enzyme catalyses a plastoquinone + NADH + (n+1) H(+)(in) = a plastoquinol + NAD(+) + n H(+)(out). It catalyses the reaction a plastoquinone + NADPH + (n+1) H(+)(in) = a plastoquinol + NADP(+) + n H(+)(out). In terms of biological role, NDH shuttles electrons from NAD(P)H:plastoquinone, via FMN and iron-sulfur (Fe-S) centers, to quinones in the photosynthetic chain and possibly in a chloroplast respiratory chain. The immediate electron acceptor for the enzyme in this species is believed to be plastoquinone. Couples the redox reaction to proton translocation, and thus conserves the redox energy in a proton gradient. In Hofmeisteria fasciculata (Helogyne fasciculata), this protein is NAD(P)H-quinone oxidoreductase subunit I, chloroplastic.